The following is a 172-amino-acid chain: Small ribosomal subunit protein uS5 (172 aa).

In terms of domain architecture, S5 DRBM spans 16–79 (LKEKLVHINR…EDGKKNVIKV (64 aa)).

It belongs to the universal ribosomal protein uS5 family. As to quaternary structure, part of the 30S ribosomal subunit. Contacts proteins S4 and S8.

Functionally, with S4 and S12 plays an important role in translational accuracy. Located at the back of the 30S subunit body where it stabilizes the conformation of the head with respect to the body. The chain is Small ribosomal subunit protein uS5 from Pelodictyon phaeoclathratiforme (strain DSM 5477 / BU-1).